Here is a 380-residue protein sequence, read N- to C-terminus: Glucose-1-phosphate adenylyltransferase (380 aa).

Residues Gly164, 179-180 (EK), and Ser190 each bind alpha-D-glucose 1-phosphate.

Belongs to the bacterial/plant glucose-1-phosphate adenylyltransferase family. As to quaternary structure, homotetramer.

The catalysed reaction is alpha-D-glucose 1-phosphate + ATP + H(+) = ADP-alpha-D-glucose + diphosphate. The protein operates within glycan biosynthesis; glycogen biosynthesis. Involved in the biosynthesis of ADP-glucose, a building block required for the elongation reactions to produce glycogen. Catalyzes the reaction between ATP and alpha-D-glucose 1-phosphate (G1P) to produce pyrophosphate and ADP-Glc. The chain is Glucose-1-phosphate adenylyltransferase from Lacticaseibacillus casei (strain BL23) (Lactobacillus casei).